The chain runs to 411 residues: Argininosuccinate lyase (411 aa).

It belongs to the lyase 1 family. Argininosuccinate lyase subfamily.

It is found in the cytoplasm. It catalyses the reaction 2-(N(omega)-L-arginino)succinate = fumarate + L-arginine. It functions in the pathway amino-acid biosynthesis; L-arginine biosynthesis; L-arginine from L-ornithine and carbamoyl phosphate: step 3/3. The sequence is that of Argininosuccinate lyase from Legionella pneumophila (strain Lens).